The primary structure comprises 580 residues: Proline--tRNA ligase (580 aa).

Belongs to the class-II aminoacyl-tRNA synthetase family. ProS type 1 subfamily. In terms of assembly, homodimer.

Its subcellular location is the cytoplasm. It catalyses the reaction tRNA(Pro) + L-proline + ATP = L-prolyl-tRNA(Pro) + AMP + diphosphate. In terms of biological role, catalyzes the attachment of proline to tRNA(Pro) in a two-step reaction: proline is first activated by ATP to form Pro-AMP and then transferred to the acceptor end of tRNA(Pro). As ProRS can inadvertently accommodate and process non-cognate amino acids such as alanine and cysteine, to avoid such errors it has two additional distinct editing activities against alanine. One activity is designated as 'pretransfer' editing and involves the tRNA(Pro)-independent hydrolysis of activated Ala-AMP. The other activity is designated 'posttransfer' editing and involves deacylation of mischarged Ala-tRNA(Pro). The misacylated Cys-tRNA(Pro) is not edited by ProRS. This Polynucleobacter necessarius subsp. necessarius (strain STIR1) protein is Proline--tRNA ligase.